Consider the following 274-residue polypeptide: MKKKIKKHLPLKRFSQNFLINQNLIKKIVKFINPQLKQTLVEIGPGLGALTKPICNIVDELIVIEIDLNLLNFLKKYSFYSKLIVFCQDALIFDYLNLFYKKNKLIRIFGNLPYHISTSLLFCFFEKNKIIQDMNFMLQKEVAERLIAFPGTKSYGRLSIIAQYYCNIKIIFNVASENFRPIPKIDSTFVNLVPHKKSPYFTHDIKVLSYITNLAFQKRRKILRHSLGKIFSEKIFLKLNVDPKLRAENLSILQYCQLSNYIIENDILKNKNFN.

Residues Asn17, Leu19, Gly44, Glu65, Asp89, and Asn111 each coordinate S-adenosyl-L-methionine.

This sequence belongs to the class I-like SAM-binding methyltransferase superfamily. rRNA adenine N(6)-methyltransferase family. RsmA subfamily.

It localises to the cytoplasm. The catalysed reaction is adenosine(1518)/adenosine(1519) in 16S rRNA + 4 S-adenosyl-L-methionine = N(6)-dimethyladenosine(1518)/N(6)-dimethyladenosine(1519) in 16S rRNA + 4 S-adenosyl-L-homocysteine + 4 H(+). Its function is as follows. Specifically dimethylates two adjacent adenosines (A1518 and A1519) in the loop of a conserved hairpin near the 3'-end of 16S rRNA in the 30S particle. May play a critical role in biogenesis of 30S subunits. The protein is Ribosomal RNA small subunit methyltransferase A of Buchnera aphidicola subsp. Schizaphis graminum (strain Sg).